Consider the following 366-residue polypeptide: ATPase ASNA1 homolog (366 aa).

33 to 40 (KGGVGKTT) provides a ligand contact to ATP. Aspartate 62 is a catalytic residue. The ATP site is built by glutamate 234 and asparagine 261.

Belongs to the arsA ATPase family. Homodimer.

It localises to the cytoplasm. The protein resides in the endoplasmic reticulum. ATPase required for the post-translational delivery of tail-anchored (TA) proteins to the endoplasmic reticulum. Recognizes and selectively binds the transmembrane domain of TA proteins in the cytosol. This complex then targets to the endoplasmic reticulum by membrane-bound receptors, where the tail-anchored protein is released for insertion. This process is regulated by ATP binding and hydrolysis. ATP binding drives the homodimer towards the closed dimer state, facilitating recognition of newly synthesized TA membrane proteins. ATP hydrolysis is required for insertion. Subsequently, the homodimer reverts towards the open dimer state, lowering its affinity for the membrane-bound receptor, and returning it to the cytosol to initiate a new round of targeting. This chain is ATPase ASNA1 homolog, found in Cryptosporidium parvum (strain Iowa II).